Here is a 437-residue protein sequence, read N- to C-terminus: UDP-N-acetylmuramate--L-alanine ligase (437 aa).

108–114 is an ATP binding site; it reads GAHGKTS.

The protein belongs to the MurCDEF family.

Its subcellular location is the cytoplasm. The enzyme catalyses UDP-N-acetyl-alpha-D-muramate + L-alanine + ATP = UDP-N-acetyl-alpha-D-muramoyl-L-alanine + ADP + phosphate + H(+). It functions in the pathway cell wall biogenesis; peptidoglycan biosynthesis. Cell wall formation. This Staphylococcus haemolyticus (strain JCSC1435) protein is UDP-N-acetylmuramate--L-alanine ligase.